Here is a 321-residue protein sequence, read N- to C-terminus: Large ribosomal subunit protein uL10 (321 aa).

Residues 284–321 (SAGTAPTGGGAAAAAVEEKKEEPEEESDDDIGFSLFDD) are disordered. Acidic residues predominate over residues 306–321 (PEEESDDDIGFSLFDD).

It belongs to the universal ribosomal protein uL10 family. P0 forms a pentameric complex by interaction with dimers of P1 and P2. Post-translationally, phosphorylated.

In terms of biological role, ribosomal protein P0 is the functional equivalent of E.coli protein L10. The sequence is that of Large ribosomal subunit protein uL10 from Oxybasis rubra (Red goosefoot).